Here is a 161-residue protein sequence, read N- to C-terminus: Carboxysome assembly protein CcmN (161 aa).

The disordered stretch occupies residues 111-140; that stretch reads LLSAETPPTTATVSSSEPAGRSPQSSAIAH. The span at 116-137 shows a compositional bias: polar residues; it reads TPPTTATVSSSEPAGRSPQSSA. The Encapsulation peptide motif lies at 144-161; that stretch reads VYGKEQFLRMRQSMFPDR.

Belongs to the CcmN family. Interacts with CcmM via the N-terminus of CcmN. Interacts with CcmK2 via the 18 C-terminal residues.

It is found in the carboxysome. Functionally, required for carboxysome formation; the N-terminus interacts with CcmM which itself binds RuBisCO (ribulose bisphosphate carboxylase, rbcL-rbcS), while the C-terminal 18 residues interact with carboxysome shell protein CcmK2. Required for growth in normal air. Its function is as follows. Beta-carboxysome assembly initiates when soluble RuBisCO is condensed into a liquid matrix in a pre-carboxysome by the RbcS-like domains of probably both CcmM58 and CcmM35. CcmN interacts with the N-terminus of CcmM58, and then recruits the CcmK2 major shell protein via CcmN's encapsulation peptide. Shell formation requires CcmK proteins and CcmO. CcmL caps the otherwise elongated carboxysome. Once fully encapsulated carboxysomes are formed, they migrate within the cell probably via interactions with the cytoskeleton. This is Carboxysome assembly protein CcmN from Synechococcus elongatus (strain ATCC 33912 / PCC 7942 / FACHB-805) (Anacystis nidulans R2).